Here is a 578-residue protein sequence, read N- to C-terminus: PTS system fructose-specific EIIB'BC component (578 aa).

PTS EIIB type-2 domains lie at 1 to 99 and 119 to 214; these read MSKI…EALA and VVAI…AALA. Cysteine 125 serves as the catalytic Phosphocysteine intermediate; for EIIB activity. Phosphocysteine; by EIIA is present on cysteine 125. Residues 241-576 enclose the PTS EIIC type-2 domain; it reads PYMHLLTGVS…KKPIPAEERA (336 aa). The next 9 membrane-spanning stretches (helical) occupy residues 251-271, 284-304, 319-339, 364-384, 405-425, 428-450, 477-497, 518-538, and 545-565; these read YMLP…VFGI, LMAI…AGFI, IGGM…VAGF, VLIL…YVVG, NAVV…GGPI, AAYT…AVMA, AGGA…IPFA, LSMA…VLAI, and LGLY…LLIA.

Its subcellular location is the cell inner membrane. The catalysed reaction is D-fructose(out) + N(pros)-phospho-L-histidyl-[protein] = D-fructose 1-phosphate(in) + L-histidyl-[protein]. The phosphoenolpyruvate-dependent sugar phosphotransferase system (sugar PTS), a major carbohydrate active transport system, catalyzes the phosphorylation of incoming sugar substrates concomitantly with their translocation across the cell membrane. The enzyme II FruAB PTS system is involved in fructose transport. This chain is PTS system fructose-specific EIIB'BC component, found in Rhodobacter capsulatus (Rhodopseudomonas capsulata).